We begin with the raw amino-acid sequence, 483 residues long: MKFIIKLFPEITIKSQSVRLRFIKILTTNIRNVLKNLEDDTLAVVRHWDHIEIRTKDDNLGPQICDALTRVPGIHHILEVEDRSYTDMHNIFEQTLEAYRETLIGKTFCVRVKRRGKHEFSSGDVERYVGGGLNQHIESAKVKLTHPQVTVHLEIDQDKLTLIKARHEGLGGFPIGTQEDVLSLISGGFDSGVSSYMLMRRGCRVHYCFFNLGGSAHEIGVKQVAHYLWNRFGSSHRVRFVAIDFEPVVGEILEKVEDGQMGVVLKRMMVRAASQVAERYGVQALVTGEALGQVSSQTLTNLRLIDNASDTLILRPLISHDKEHIINLAREIGTEDFAKTMPEYCGVISKSPTVKAVKAKIEEEESHFDFSILDRVVNEAKNVDIREIAAQSREQVVEVETVAELADTDVLLDIRAPDEQDEKPLKLDGIEVRTLPFYKLSTQFADLDQSKSYLLYCDRGVMSRLQALYLREQGYTNVKVYRP.

The THUMP domain maps to 62–166 (PQICDALTRV…QDKLTLIKAR (105 aa)). ATP-binding positions include 184 to 185 (LI), Lys266, Gly288, and Gln297. A disulfide bridge connects residues Cys345 and Cys457. In terms of domain architecture, Rhodanese spans 405 to 483 (LADTDVLLDI…GYTNVKVYRP (79 aa)). The Cysteine persulfide intermediate role is filled by Cys457.

Belongs to the ThiI family.

It is found in the cytoplasm. The enzyme catalyses [ThiI sulfur-carrier protein]-S-sulfanyl-L-cysteine + a uridine in tRNA + 2 reduced [2Fe-2S]-[ferredoxin] + ATP + H(+) = [ThiI sulfur-carrier protein]-L-cysteine + a 4-thiouridine in tRNA + 2 oxidized [2Fe-2S]-[ferredoxin] + AMP + diphosphate. It catalyses the reaction [ThiS sulfur-carrier protein]-C-terminal Gly-Gly-AMP + S-sulfanyl-L-cysteinyl-[cysteine desulfurase] + AH2 = [ThiS sulfur-carrier protein]-C-terminal-Gly-aminoethanethioate + L-cysteinyl-[cysteine desulfurase] + A + AMP + 2 H(+). The protein operates within cofactor biosynthesis; thiamine diphosphate biosynthesis. Catalyzes the ATP-dependent transfer of a sulfur to tRNA to produce 4-thiouridine in position 8 of tRNAs, which functions as a near-UV photosensor. Also catalyzes the transfer of sulfur to the sulfur carrier protein ThiS, forming ThiS-thiocarboxylate. This is a step in the synthesis of thiazole, in the thiamine biosynthesis pathway. The sulfur is donated as persulfide by IscS. The chain is tRNA sulfurtransferase from Yersinia enterocolitica serotype O:8 / biotype 1B (strain NCTC 13174 / 8081).